A 314-amino-acid polypeptide reads, in one-letter code: Epithelial cell adhesion molecule (314 aa).

The first 23 residues, 1–23 (MAPPQVLAFGLLLAAATATFAAA), serve as a signal peptide directing secretion. Topologically, residues 24 to 265 (QEECVCENYK…APEFSMQGLK (242 aa)) are extracellular. Intrachain disulfides connect Cys-27–Cys-46, Cys-29–Cys-59, Cys-38–Cys-48, Cys-66–Cys-99, Cys-110–Cys-116, and Cys-118–Cys-135. The 73-residue stretch at 63-135 (AAKCLVMKAE…RTDKDTEITC (73 aa)) folds into the Thyroglobulin type-1 domain. Asn-74 is a glycosylation site (N-linked (GlcNAc...) asparagine; partial). Asn-111 is a glycosylation site (N-linked (GlcNAc...) asparagine). N-linked (GlcNAc...) asparagine glycosylation is present at Asn-198. Residues 266–288 (AGVIAVIVVVVIAVVAGIVVLVI) form a helical membrane-spanning segment. Over 289 to 314 (SRKKRMAKYEKAEIKEMGEMHRELNA) the chain is Cytoplasmic.

This sequence belongs to the EPCAM family. Monomer. Interacts with phosphorylated CLDN7. Post-translationally, hyperglycosylated in carcinoma tissue as compared with autologous normal epithelia. Glycosylation at Asn-198 is crucial for protein stability. In terms of tissue distribution, highly and selectively expressed by undifferentiated rather than differentiated embryonic stem cells (ESC). Levels rapidly diminish as soon as ESC's differentiate (at protein levels). Expressed in almost all epithelial cell membranes but not on mesodermal or neural cell membranes. Found on the surface of adenocarcinoma.

It is found in the lateral cell membrane. It localises to the cell junction. Its subcellular location is the tight junction. May act as a physical homophilic interaction molecule between intestinal epithelial cells (IECs) and intraepithelial lymphocytes (IELs) at the mucosal epithelium for providing immunological barrier as a first line of defense against mucosal infection. Plays a role in embryonic stem cells proliferation and differentiation. Up-regulates the expression of FABP5, MYC and cyclins A and E. The protein is Epithelial cell adhesion molecule (EPCAM) of Homo sapiens (Human).